A 215-amino-acid chain; its full sequence is Large ribosomal subunit protein uL1 (215 aa).

This sequence belongs to the universal ribosomal protein uL1 family. As to quaternary structure, part of the 50S ribosomal subunit.

In terms of biological role, binds directly to 23S rRNA. Probably involved in E site tRNA release. Protein L1 is also a translational repressor protein, it controls the translation of its operon by binding to its mRNA. The polypeptide is Large ribosomal subunit protein uL1 (Archaeoglobus fulgidus (strain ATCC 49558 / DSM 4304 / JCM 9628 / NBRC 100126 / VC-16)).